The following is a 523-amino-acid chain: Translation initiation factor eIF2B subunit delta (523 aa).

The tract at residues 1–147 (MAAVAVAVRE…PSGVKRLPEY (147 aa)) is disordered. The residue at position 2 (Ala-2) is an N-acetylalanine. Ser-12 is subject to Phosphoserine. Positions 30–40 (EMTKEEKLQLR) are enriched in basic and acidic residues. A compositionally biased stretch (basic residues) spans 41-51 (KEKKQQKKKRK). Thr-86 is modified (phosphothreonine). A compositionally biased stretch (basic and acidic residues) spans 87-121 (PREKVPAGRSKAELRAERRAKQEAERALKQARKGE). Position 130 is a phosphoserine (Ser-130). The tract at residues 170 to 179 (RKDYGSKVSL) is may bind the chemical integrated stress response (ISR) inhibitor ISRIB.

It belongs to the eIF-2B alpha/beta/delta subunits family. In terms of assembly, component of the translation initiation factor 2B (eIF2B) complex which is a heterodecamer of two sets of five different subunits: alpha, beta, gamma, delta and epsilon. Subunits alpha, beta and delta comprise a regulatory subcomplex and subunits epsilon and gamma comprise a catalytic subcomplex. Within the complex, the hexameric regulatory complex resides at the center, with the two heterodimeric catalytic subcomplexes bound on opposite sides.

Its subcellular location is the cytoplasm. The protein resides in the cytosol. Activated by the chemical integrated stress response (ISR) inhibitor ISRIB which stimulates guanine nucleotide exchange factor activity for both phosphorylated and unphosphorylated eIF2. Functionally, acts as a component of the translation initiation factor 2B (eIF2B) complex, which catalyzes the exchange of GDP for GTP on eukaryotic initiation factor 2 (eIF2) gamma subunit. Its guanine nucleotide exchange factor activity is repressed when bound to eIF2 complex phosphorylated on the alpha subunit, thereby limiting the amount of methionyl-initiator methionine tRNA available to the ribosome and consequently global translation is repressed. This chain is Translation initiation factor eIF2B subunit delta (EIF2B4), found in Homo sapiens (Human).